Here is a 204-residue protein sequence, read N- to C-terminus: MAEAEVKAQPEGDAAPQSKALLFNKWDVSEVKVTDPSLVRYVNLTPQIIPHSCGKFSRQEFNKANMMIVERLINRLMQTENNTGKKQLAIGIVRDAFELINKKTKRNPIEVLVEAIGNTGPREETVRLKYGGINVPKSVDTAPLRRVDSAIGFIAEAVWKSSRKSKKPASAILADELIAASKGDAKCYSVGKKEEKERIAKSAR.

This sequence belongs to the universal ribosomal protein uS7 family. Part of the 30S ribosomal subunit.

Functionally, one of the primary rRNA binding proteins, it binds directly to 16S rRNA where it nucleates assembly of the head domain of the 30S subunit. Is located at the subunit interface close to the decoding center. This chain is Small ribosomal subunit protein uS7, found in Methanoregula boonei (strain DSM 21154 / JCM 14090 / 6A8).